A 250-amino-acid chain; its full sequence is LOB domain-containing protein 37 (250 aa).

Residues 1-107 form the LOB domain; that stretch reads MSCNGCRVLR…VETVLRGGSL (107 aa). Positions 145-227 are disordered; sequence DSTDRNIYHH…DSGTTTTTTA (83 aa). Low complexity predominate over residues 157 to 170; the sequence is FSSSRSRSTMDSSS.

Belongs to the LOB domain-containing protein family. Expressed in young shoots, roots, stems, leaves and flowers.

This Arabidopsis thaliana (Mouse-ear cress) protein is LOB domain-containing protein 37 (LBD37).